A 150-amino-acid polypeptide reads, in one-letter code: Protein Turandot X1/X2 (150 aa).

An N-terminal signal peptide occupies residues 1 to 22 (MRLYIGSLLICVLLGIVPFATA). A disordered region spans residues 127 to 150 (REEGQSNHANSPTTSPSRIQKMTK). The segment covering 132–150 (SNHANSPTTSPSRIQKMTK) has biased composition (polar residues).

The protein belongs to the Turandot family.

Its subcellular location is the secreted. Its function is as follows. A humoral factor that may play a role in stress tolerance. The chain is Protein Turandot X1/X2 from Drosophila sechellia (Fruit fly).